The chain runs to 220 residues: Vesicle-associated membrane protein 7 (220 aa).

Ala2 carries the post-translational modification N-acetylalanine. The Cytoplasmic segment spans residues 2–188 (AILFAVVARG…ARAMCVKNVK (187 aa)). A Longin domain is found at 7 to 110 (VVARGTTILA…AMNSEFSSVL (104 aa)). In terms of domain architecture, v-SNARE coiled-coil homology spans 125–185 (RVTETQAQVD…RNLARAMCVK (61 aa)). Phosphoserine occurs at positions 167 and 168. Residues 189 to 209 (LTAIIVVVSIVFIYIIVSPLC) traverse the membrane as a helical; Anchor for type IV membrane protein segment. Topologically, residues 210–220 (GGFTWPSCVKK) are vesicular.

The protein belongs to the synaptobrevin family. In terms of assembly, may interact with STX17. Component of the SNARE complex composed of STX4, SNAP23 and VAMP7 that binds SYT7 during lysosomal exocytosis. Component of the SNARE complex composed of STX7, STX8, VAMP7 and VTI1B that is required for heterotypic fusion of late endosomes with lysosomes. Interacts with PICALM. Interacts with RAB21. Expressed in brain, kidney, liver, lung, spleen and thymus. Not expressed in heart and skeletal muscle.

Its subcellular location is the cytoplasmic vesicle. The protein localises to the secretory vesicle membrane. The protein resides in the golgi apparatus. It is found in the trans-Golgi network membrane. It localises to the late endosome membrane. Its subcellular location is the lysosome membrane. The protein localises to the endoplasmic reticulum membrane. The protein resides in the phagosome membrane. It is found in the synapse. It localises to the synaptosome. Functionally, involved in the targeting and/or fusion of transport vesicles to their target membrane during transport of proteins from the early endosome to the lysosome. Required for heterotypic fusion of late endosomes with lysosomes and homotypic lysosomal fusion. Required for calcium regulated lysosomal exocytosis. Involved in the export of chylomicrons from the endoplasmic reticulum to the cis Golgi. Required for exocytosis of mediators during eosinophil and neutrophil degranulation, and target cell killing by natural killer cells. Required for focal exocytosis of late endocytic vesicles during phagosome formation. The polypeptide is Vesicle-associated membrane protein 7 (Vamp7) (Rattus norvegicus (Rat)).